We begin with the raw amino-acid sequence, 319 residues long: Phosphoenolpyruvate transferase (319 aa).

D50 lines the 7,8-didemethyl-8-hydroxy-5-deazariboflavin pocket.

The protein belongs to the CofD family. In terms of assembly, homodimer. It depends on Mg(2+) as a cofactor.

The catalysed reaction is enolpyruvoyl-2-diphospho-5'-guanosine + 7,8-didemethyl-8-hydroxy-5-deazariboflavin = dehydro coenzyme F420-0 + GMP + H(+). The protein operates within cofactor biosynthesis; coenzyme F420 biosynthesis. Its function is as follows. Catalyzes the transfer of the phosphoenolpyruvate moiety from enoylpyruvoyl-2-diphospho-5'-guanosine (EPPG) to 7,8-didemethyl-8-hydroxy-5-deazariboflavin (FO) with the formation of dehydro coenzyme F420-0 and GMP. In Streptomyces avermitilis (strain ATCC 31267 / DSM 46492 / JCM 5070 / NBRC 14893 / NCIMB 12804 / NRRL 8165 / MA-4680), this protein is Phosphoenolpyruvate transferase.